Here is a 146-residue protein sequence, read N- to C-terminus: MSIPFSNTHYRIPQGFGNLLEGLTREILREQPDNIPAFAAAYFENLLEKREKTNFDPAEWGAKVDDRFYNNHAFQEHESEKCEAEEKSQSVTEEETPVLTIDSEDDKDKEEMAALKIQAAFRGHLAREDVKKIRTNKAEEETEENN.

The segment covering E76–S88 has biased composition (basic and acidic residues). The tract at residues E76–K109 is disordered. Positions T92–D108 are enriched in acidic residues. Residues E110 to E139 form the IQ domain.

As to quaternary structure, homodimer. May interact with ROPN1. In terms of processing, the N-terminus is blocked. As to expression, testis- and sperm-specific.

Its subcellular location is the membrane. Its function is as follows. Sperm surface zona pellucida binding protein. Helps to bind spermatozoa to the zona pellucida with high affinity. Might function in binding zona pellucida and carbohydrates. This Oryctolagus cuniculus (Rabbit) protein is Sperm surface protein Sp17 (SPA17).